Here is a 147-residue protein sequence, read N- to C-terminus: MMKLNLFINANETESYIDIHAPKMNDHVQSIINAVNDLDKSHTLVGYIDKEIHIINVSDVITFQVINKNVTAITSNQKFKLKLRLYELEKQLPQHFIRISKSEIVNKYYIEKLLLEPNGLIRMYLKDAHYTYSSRRYLKSIKERLSI.

Residues 44–147 (LVGYIDKEIH…LKSIKERLSI (104 aa)) enclose the HTH LytTR-type domain.

The protein localises to the cytoplasm. This is an uncharacterized protein from Staphylococcus aureus (strain Mu50 / ATCC 700699).